Reading from the N-terminus, the 221-residue chain is MENNDELMPREKLLAFGAKALSDYELLAIFLRTGIKGCPVMSLSKNVLTHFGPLHALLSADKKAFCSVKGLGITQFIQLQAITEMTKRYLKQDMLSTPIINDPETVKLFLLTELQHEEREVFMVLFLDNQHRLIKKERLFLGTIYVSAVYPREIIKEALYCNAAALILAHNHPSGITEPSYSDQLITKKIQDAAELMEIRVLDHLIVGKSDCYSFAENCLL.

In terms of domain architecture, MPN spans 99–221 (IINDPETVKL…CYSFAENCLL (123 aa)). Positions 170, 172, and 183 each coordinate Zn(2+). The JAMM motif motif lies at 170–183 (HNHPSGITEPSYSD).

Belongs to the UPF0758 family.

This Haemophilus influenzae (strain ATCC 51907 / DSM 11121 / KW20 / Rd) protein is UPF0758 protein HI_0952.